The sequence spans 235 residues: Deoxyribose-phosphate aldolase (235 aa).

Aspartate 107 functions as the Proton donor/acceptor in the catalytic mechanism. The Schiff-base intermediate with acetaldehyde role is filled by lysine 167. The active-site Proton donor/acceptor is the lysine 197.

Belongs to the DeoC/FbaB aldolase family. DeoC type 1 subfamily. Homotetramer.

It is found in the cytoplasm. The catalysed reaction is 2-deoxy-D-ribose 5-phosphate = D-glyceraldehyde 3-phosphate + acetaldehyde. Its pathway is carbohydrate degradation; 2-deoxy-D-ribose 1-phosphate degradation; D-glyceraldehyde 3-phosphate and acetaldehyde from 2-deoxy-alpha-D-ribose 1-phosphate: step 2/2. Catalyzes a reversible aldol reaction between acetaldehyde and D-glyceraldehyde 3-phosphate to generate 2-deoxy-D-ribose 5-phosphate. This is Deoxyribose-phosphate aldolase from Aeropyrum pernix (strain ATCC 700893 / DSM 11879 / JCM 9820 / NBRC 100138 / K1).